The primary structure comprises 521 residues: Glucose-1-phosphate adenylyltransferase large subunit 3, chloroplastic (521 aa).

The N-terminal 61 residues, M1–A61, are a transit peptide targeting the chloroplast.

It belongs to the bacterial/plant glucose-1-phosphate adenylyltransferase family. Heterotetramer. Probably are expressed in roots, flowers and/or seeds.

It localises to the plastid. Its subcellular location is the chloroplast. The enzyme catalyses alpha-D-glucose 1-phosphate + ATP + H(+) = ADP-alpha-D-glucose + diphosphate. It participates in glycan biosynthesis; starch biosynthesis. With respect to regulation, activated by 3'phosphoglycerate, inhibited by orthophosphate. Allosteric regulation. This protein plays a role in synthesis of starch. It catalyzes the synthesis of the activated glycosyl donor, ADP-glucose from Glc-1-P and ATP. The protein is Glucose-1-phosphate adenylyltransferase large subunit 3, chloroplastic (APL3) of Arabidopsis thaliana (Mouse-ear cress).